Consider the following 216-residue polypeptide: Transmembrane protein 125 (216 aa).

4 helical membrane passes run 32 to 52 (LLCF…GVAL), 65 to 85 (LAVG…QLMS), 111 to 131 (AVVV…LAGL), and 144 to 164 (MLSV…GLLL).

The protein resides in the membrane. The protein is Transmembrane protein 125 (Tmem125) of Mus musculus (Mouse).